The sequence spans 95 residues: Aspartyl/glutamyl-tRNA(Asn/Gln) amidotransferase subunit C (95 aa).

This sequence belongs to the GatC family. In terms of assembly, heterotrimer of A, B and C subunits.

The enzyme catalyses L-glutamyl-tRNA(Gln) + L-glutamine + ATP + H2O = L-glutaminyl-tRNA(Gln) + L-glutamate + ADP + phosphate + H(+). It carries out the reaction L-aspartyl-tRNA(Asn) + L-glutamine + ATP + H2O = L-asparaginyl-tRNA(Asn) + L-glutamate + ADP + phosphate + 2 H(+). Functionally, allows the formation of correctly charged Asn-tRNA(Asn) or Gln-tRNA(Gln) through the transamidation of misacylated Asp-tRNA(Asn) or Glu-tRNA(Gln) in organisms which lack either or both of asparaginyl-tRNA or glutaminyl-tRNA synthetases. The reaction takes place in the presence of glutamine and ATP through an activated phospho-Asp-tRNA(Asn) or phospho-Glu-tRNA(Gln). The chain is Aspartyl/glutamyl-tRNA(Asn/Gln) amidotransferase subunit C from Clostridium botulinum (strain ATCC 19397 / Type A).